A 1179-amino-acid polypeptide reads, in one-letter code: Protein turtle homolog A (1179 aa).

The N-terminal stretch at M1–G20 is a signal peptide. Residues R21–P734 are Extracellular-facing. Ig-like domains follow at residues P24–N124, P136–T216, P226–T318, P322–T410, and P418–S498. 5 disulfide bridges follow: C41/C108, C158/C206, C248/C301, C344/C395, and C440/C486. N188 carries an N-linked (GlcNAc...) asparagine glycan. 2 Fibronectin type-III domains span residues S507–A611 and P623–L718. N513 and N524 each carry an N-linked (GlcNAc...) asparagine glycan. A helical membrane pass occupies residues V735–L755. The Cytoplasmic portion of the chain corresponds to A756–L1179. The tract at residues A766 to Q807 is disordered. S809 is subject to Phosphoserine. Disordered regions lie at residues L819 to C846, E869 to P895, P942 to A979, and A1016 to N1079. Polar residues predominate over residues L884 to G893. Residues S1020 to G1029 are compositionally biased toward polar residues. Positions T1177–L1179 match the PDZ-binding motif.

Belongs to the immunoglobulin superfamily. Turtle family. In terms of assembly, interacts with SHANK1 and probably with MAGI2. Expressed in hippocampal neurons (at protein level).

It localises to the cell membrane. The protein resides in the synapse. Functionally, functions in dendrite outgrowth and synapse maturation. The polypeptide is Protein turtle homolog A (Igsf9) (Rattus norvegicus (Rat)).